Consider the following 171-residue polypeptide: KRAB domain-containing protein 4 (171 aa).

Residues 8–79 (LTFKDVFVDF…DGGTPVRTCA (72 aa)) form the KRAB domain.

In terms of tissue distribution, expressed in brain, ovary, testis, prostate, tonsil, heart, bone marrow, colon, breast and kidney.

This chain is KRAB domain-containing protein 4 (KRBOX4), found in Homo sapiens (Human).